Here is a 362-residue protein sequence, read N- to C-terminus: 3-isopropylmalate dehydrogenase (362 aa).

78–91 (GPKWETLPPDEQPE) is an NAD(+) binding site. Positions 99, 109, 138, and 227 each coordinate substrate. Residues D227, D251, and D255 each coordinate Mg(2+). 285–297 (GSAPDIAGQGIAN) contacts NAD(+).

Belongs to the isocitrate and isopropylmalate dehydrogenases family. LeuB type 1 subfamily. In terms of assembly, homodimer. The cofactor is Mg(2+). It depends on Mn(2+) as a cofactor.

It is found in the cytoplasm. It catalyses the reaction (2R,3S)-3-isopropylmalate + NAD(+) = 4-methyl-2-oxopentanoate + CO2 + NADH. It functions in the pathway amino-acid biosynthesis; L-leucine biosynthesis; L-leucine from 3-methyl-2-oxobutanoate: step 3/4. Catalyzes the oxidation of 3-carboxy-2-hydroxy-4-methylpentanoate (3-isopropylmalate) to 3-carboxy-4-methyl-2-oxopentanoate. The product decarboxylates to 4-methyl-2 oxopentanoate. This is 3-isopropylmalate dehydrogenase from Geobacter metallireducens (strain ATCC 53774 / DSM 7210 / GS-15).